A 241-amino-acid chain; its full sequence is Protein unc-119 homolog B-B (241 aa).

Residues 1–46 (MSGSNREAALAGQPKDERKKSGGGVINRLKARRVQGKESGTSDQSS) are disordered. Position 132 (Tyr-132) interacts with tetradecanoate.

Belongs to the PDE6D/unc-119 family.

The protein localises to the cell projection. The protein resides in the cilium. In terms of biological role, myristoyl-binding protein that acts as a cargo adapter: specifically binds the myristoyl moiety of a subset of N-terminally myristoylated proteins and is required for their localization. Plays a key role in localization of proteins to the primary cilium membrane. The protein is Protein unc-119 homolog B-B (unc119b-b) of Xenopus laevis (African clawed frog).